Reading from the N-terminus, the 88-residue chain is UPF0250 protein swp_3927 (88 aa).

It belongs to the UPF0250 family.

The protein is UPF0250 protein swp_3927 of Shewanella piezotolerans (strain WP3 / JCM 13877).